We begin with the raw amino-acid sequence, 232 residues long: Ribosomal RNA small subunit methyltransferase G (232 aa).

Residues Gly-93, Leu-98, 144–145 (VE), and Arg-163 each bind S-adenosyl-L-methionine.

Belongs to the methyltransferase superfamily. RNA methyltransferase RsmG family.

Its subcellular location is the cytoplasm. It catalyses the reaction guanosine(527) in 16S rRNA + S-adenosyl-L-methionine = N(7)-methylguanosine(527) in 16S rRNA + S-adenosyl-L-homocysteine. Its function is as follows. Specifically methylates the N7 position of guanine in position 527 of 16S rRNA. The protein is Ribosomal RNA small subunit methyltransferase G of Burkholderia pseudomallei (strain 1710b).